Consider the following 175-residue polypeptide: Bifunctional protein PyrR (175 aa).

Positions 97–109 (IVLIDDVLFTGRT) match the PRPP-binding motif.

This sequence belongs to the purine/pyrimidine phosphoribosyltransferase family. PyrR subfamily. As to quaternary structure, homodimer and homohexamer; in equilibrium.

It carries out the reaction UMP + diphosphate = 5-phospho-alpha-D-ribose 1-diphosphate + uracil. Regulates transcriptional attenuation of the pyrimidine nucleotide (pyr) operon by binding in a uridine-dependent manner to specific sites on pyr mRNA. This disrupts an antiterminator hairpin in the RNA and favors formation of a downstream transcription terminator, leading to a reduced expression of downstream genes. In terms of biological role, also displays a weak uracil phosphoribosyltransferase activity which is not physiologically significant. This Leuconostoc citreum (strain KM20) protein is Bifunctional protein PyrR.